We begin with the raw amino-acid sequence, 315 residues long: Solute carrier family 25 member 32 (315 aa).

Solcar repeat units follow at residues 20–109, 118–209, and 222–306; these read HVRY…IKSY, LEAT…LKLK, and LSTV…VSHF. 6 helical membrane passes run 26–43, 89–106, 123–143, 186–203, 227–243, and 281–300; these read LIAGVSGGVLSNLALHPL, IWGAGLSWGLYFFFYNAI, YLVSAAEAGAMTLCITNPLWV, FVPGLFGTSHGALQFMAY, YISVAALSKIFAVAATY, and GIAPNLIRVTPACCITFVVY.

The protein belongs to the mitochondrial carrier (TC 2.A.29) family. As to expression, ubiquitous.

It is found in the mitochondrion inner membrane. The catalysed reaction is FAD(in) = FAD(out). Its function is as follows. Facilitates flavin adenine dinucleotide (FAD) translocation across the mitochondrial inner membrane into the mitochondrial matrix where it acts as a redox cofactor to assist flavoenzyme activities in fundamental metabolic processes including fatty acid beta-oxidation, amino acid and choline metabolism as well as mitochondrial electron transportation. In particular, provides FAD to DLD dehydrogenase of the glycine cleavage system, part of mitochondrial one-carbon metabolic pathway involved in neural tube closure in early embryogenesis. The polypeptide is Solute carrier family 25 member 32 (Homo sapiens (Human)).